Consider the following 502-residue polypeptide: Glutamate--tRNA ligase (502 aa).

The 'HIGH' region signature appears at proline 9–threonine 19. Zn(2+) is bound by residues cysteine 106, cysteine 108, cysteine 133, and histidine 135. The 'KMSKS' region signature appears at lysine 250 to arginine 254. Lysine 253 is a binding site for ATP.

This sequence belongs to the class-I aminoacyl-tRNA synthetase family. Glutamate--tRNA ligase type 1 subfamily. As to quaternary structure, monomer. Zn(2+) is required as a cofactor.

It localises to the cytoplasm. The enzyme catalyses tRNA(Glu) + L-glutamate + ATP = L-glutamyl-tRNA(Glu) + AMP + diphosphate. In terms of biological role, catalyzes the attachment of glutamate to tRNA(Glu) in a two-step reaction: glutamate is first activated by ATP to form Glu-AMP and then transferred to the acceptor end of tRNA(Glu). The polypeptide is Glutamate--tRNA ligase (Protochlamydia amoebophila (strain UWE25)).